Consider the following 559-residue polypeptide: GTP diphosphokinase CRSH2, chloroplastic (559 aa).

The transit peptide at 1-37 (MASAGGEVVVVDPAAAAVAPDVEHHAPAPRLTPAGSG) directs the protein to the chloroplast. The 101-residue stretch at 87 to 187 (SLARALIVAA…LELAIRLDAM (101 aa)) folds into the HD domain. EF-hand domains are found at residues 449-484 (ASAG…LGAG) and 486-518 (KDAE…VELK). Ca(2+)-binding residues include Asp462, Asn464, Asp466, Arg468, Glu473, Asp496, Asn498, Asp500, Ser502, and Glu507.

It belongs to the RelA/SpoT family. Expressed in shoots.

The protein localises to the plastid. It localises to the chloroplast. It carries out the reaction GTP + ATP = guanosine 3'-diphosphate 5'-triphosphate + AMP. Its activity is regulated as follows. Activated by calcium. In terms of biological role, possesses calcium-dependent ppGpp (guanosine 3'-diphosphate 5'-diphosphate) synthetase activity in vitro and is able to functionally complement E.coli relA mutants. May be involved in a rapid plant ppGpp-mediated response to pathogens and other stresses. The protein is GTP diphosphokinase CRSH2, chloroplastic of Oryza sativa subsp. japonica (Rice).